Consider the following 388-residue polypeptide: MRFLTSGESHGPQLTVIIEGVPANLKITAEDINEEMFKRQGGYGRGRRMKIEKDGVEIVSGVRNGYTLGSPVTIVVTNDDFTHWRNIMGVAPISEEEQEQMKRTISKPRPGHADLIGGIKYNHRDLRNVLERSSARETAARVAVGAVCKILLKQLGINVLSRVVEIGGIKDDTDYDLDTIKKHEDSNDVRVVNEDIAQEIRAKIDQAKKDGDSLGGVVQVIVKNMPVGIGSYVHYDRKLDGRIAQGVVGINAFKGVSFGEGFKAAEKPGSQIQDPILYNDEEGYTRASNHLGGLEGGMSNGMPIVVNGVMKPIPTLYKPLASVDIETKEPFKATIERSDSCAVPAASIVCEHAVAFEITKTLLEEFQSNYMEQLQQQVDERRLRNIEF.

NADP(+) is bound by residues Arg39 and Arg45. FMN contacts are provided by residues 132-134, 251-252, Gly296, 311-315, and Arg337; these read RSS, NA, and KPIPT.

The protein belongs to the chorismate synthase family. In terms of assembly, homotetramer. It depends on FMNH2 as a cofactor.

It carries out the reaction 5-O-(1-carboxyvinyl)-3-phosphoshikimate = chorismate + phosphate. It participates in metabolic intermediate biosynthesis; chorismate biosynthesis; chorismate from D-erythrose 4-phosphate and phosphoenolpyruvate: step 7/7. In terms of biological role, catalyzes the anti-1,4-elimination of the C-3 phosphate and the C-6 proR hydrogen from 5-enolpyruvylshikimate-3-phosphate (EPSP) to yield chorismate, which is the branch point compound that serves as the starting substrate for the three terminal pathways of aromatic amino acid biosynthesis. This reaction introduces a second double bond into the aromatic ring system. The polypeptide is Chorismate synthase (Staphylococcus carnosus (strain TM300)).